The primary structure comprises 117 residues: DNA-binding protein RdgB (117 aa).

Residues 82–102 (NHSALAKKYNVSLQWIYKIVR) constitute a DNA-binding region (H-T-H motif).

Belongs to the c/mor transcriptional regulatory family.

Its function is as follows. Regulates pectin lyase production in response to DNA damage. This chain is DNA-binding protein RdgB (rdgB), found in Pectobacterium carotovorum subsp. carotovorum (Erwinia carotovora subsp. carotovora).